The sequence spans 481 residues: Leukocyte immunoglobulin-like receptor subfamily A member 6 (481 aa).

An N-terminal signal peptide occupies residues 1-23 (MTPALTALLCLGLSLGPRTRVQA). At 24 to 447 (GPFPKPTLWA…SHAKDYTVEN (424 aa)) the chain is on the extracellular side. Cys49 and Cys98 are oxidised to a cystine. Residues 59–70 (QLDKEGSPEPLD) show a composition bias toward basic and acidic residues. The segment at 59-78 (QLDKEGSPEPLDRNNPLEPK) is disordered. Residue Asn139 is glycosylated (N-linked (GlcNAc...) asparagine). 2 disulfides stabilise this stretch: Cys144/Cys196 and Cys245/Cys296. Ig-like C2-type domains lie at 225 to 314 (PSLL…DPLN) and 323 to 408 (DTVS…HLLS). Asn301 and Asn340 each carry an N-linked (GlcNAc...) asparagine glycan. Cysteines 345 and 396 form a disulfide. Positions 419 to 439 (SGHSGGSSLPPTGPPSTPASH) are disordered. The chain crosses the membrane as a helical span at residues 448–468 (LIRMGMAGLVLVFLGILLFEA). Topologically, residues 469-481 (QHSQRNPQDAAGR) are cytoplasmic.

It localises to the membrane. Functionally, may act as receptor for class I MHC antigens. The chain is Leukocyte immunoglobulin-like receptor subfamily A member 6 (LILRA6) from Homo sapiens (Human).